A 453-amino-acid chain; its full sequence is Cyclic GMP-AMP phosphodiesterase SMPDL3A (453 aa).

Positions 1 to 22 (MALVRALVCCLLTAWHCRSGLG) are cleaved as a signal peptide. 2 residues coordinate Zn(2+): D45 and H47. The cysteines at positions 62 and 81 are disulfide-linked. N69 is a glycosylation site (N-linked (GlcNAc...) asparagine). D110 is a binding site for Zn(2+). An ATP-binding site is contributed by H114. N131 is a glycosylation site (N-linked (GlcNAc...) asparagine). N151 contacts Zn(2+). 2 residues coordinate ATP: N151 and H152. N-linked (GlcNAc...) asparagine glycans are attached at residues N222 and N238. Position 252 (H252) interacts with Zn(2+). N263 carries N-linked (GlcNAc...) asparagine glycosylation. H293 and H295 together coordinate Zn(2+). An N-linked (GlcNAc...) asparagine glycan is attached at N356. Disulfide bonds link C420/C424 and C430/C443. N437 is a glycosylation site (N-linked (GlcNAc...) asparagine).

Belongs to the acid sphingomyelinase family. In terms of assembly, monomer. Homodimer; homodimerizes following 2',3'-cGAMP-binding. It depends on Zn(2+) as a cofactor. In terms of processing, N-glycosylation is required for protein maturation, secretion and phosphodiesterase activity. As to expression, detected in blood serum. Detected in macrophages (at protein level).

The protein localises to the secreted. It catalyses the reaction 2',3'-cGAMP + H2O = 5'-pGpA(2'-5') + H(+). It carries out the reaction 5'-pGpA(2'-5') + H2O = 5'-GpA(2'-5') + phosphate. The enzyme catalyses a ribonucleoside 5'-triphosphate + H2O = a ribonucleoside 5'-diphosphate + phosphate + H(+). The catalysed reaction is ATP + H2O = ADP + phosphate + H(+). With respect to regulation, requires micromolar levels of Zn(2+) for activity. Inhibited by millimolar levels of Zn(2+). Functionally, cyclic-nucleotide phosphodiesterase that acts as a negative regulator of innate immunity by mediating degradation of 2',3'-cGAMP, thereby inhibiting the cGAS-STING signaling. Specifically linearizes 2',3'-cGAMP into 2'5'-bond pGpA and further hydrolyzes pGpA to produce GpA. Also has in vitro nucleotide phosphodiesterase activity with nucleoside triphosphates, such as ATP. Has in vitro activity with p-nitrophenyl-TMP. Has lower activity with nucleoside diphosphates, and no activity with nucleoside monophosphates. Has in vitro activity with CDP-choline, giving rise to CMP and phosphocholine. Has in vitro activity with CDP-ethanolamine. Does not have sphingomyelin phosphodiesterase activity. This chain is Cyclic GMP-AMP phosphodiesterase SMPDL3A, found in Homo sapiens (Human).